Here is a 195-residue protein sequence, read N- to C-terminus: GRF1-interacting factor 2 (195 aa).

The interval 166-195 (QQPETGLGGNVGLRGGKQDGADGQGKDDGK) is disordered. Gly residues predominate over residues 171-180 (GLGGNVGLRG). Residues 181–195 (GKQDGADGQGKDDGK) are compositionally biased toward basic and acidic residues.

The protein belongs to the SS18 family. In terms of assembly, interacts with GRF1. In terms of tissue distribution, predominantly expressed in shoot tips containing the shoot apical meristem (SAM) and flower buds. Also expressed in mature flowers.

Transcription coactivator that plays a role in the regulation of cell expansion in leaf and cotyledons tissues. Component of a network formed by miR396, the GRFs and their interacting factors (GIFs) acting in the regulation of meristem function, at least partially through the control of cell proliferation. GIFs are involved in the positive regulation of cell proliferation of lateral organs in a functionally redundant manner. This Arabidopsis thaliana (Mouse-ear cress) protein is GRF1-interacting factor 2 (GIF2).